The following is a 1241-amino-acid chain: Putative ABC transporter B family member 8 (1241 aa).

The chain crosses the membrane as a helical span at residues 24–44 (FADWIDIVLMVLGSVGAIGDG). The ABC transmembrane type-1 1 domain maps to 33–323 (MVLGSVGAIG…ALTEIRYFSE (291 aa)). An N-linked (GlcNAc...) asparagine glycan is attached at Asn-48. 5 helical membrane passes run 82–102 (LYFVYLGLAILGVAFMEGYCW), 157–177 (VPIFLMHISVFITGLVFSAYF), 183–203 (VVAIPTLVLLLIPGLIYGKYL), 263–283 (GLAVGSSGISFTIWAFLAWYG), and 297–317 (IYAAGISFVLGGISLGTALTE). Residues 360-596 (VEFERVTLVY…NNHYAKLVKL (237 aa)) enclose the ABC transporter 1 domain. 395–402 (GASGSGKS) is a binding site for ATP. 3 N-linked (GlcNAc...) asparagine glycosylation sites follow: Asn-571, Asn-632, and Asn-648. An ABC transmembrane type-1 2 domain is found at 676 to 964 (SLVGCISATT…AGSMTSDLAK (289 aa)). Helical transmembrane passes span 686–706 (FGAIQPVYALSIGGMISAFFA) and 716–736 (IHIYSLIFISLTFLSITLNLL). Residue Asn-773 is glycosylated (N-linked (GlcNAc...) asparagine). Transmembrane regions (helical) follow at residues 797 to 815 (ISLLVQTISGVTIAMIIGL) and 821 to 838 (LALVMIAVQPLSILCFYT). N-linked (GlcNAc...) asparagine glycosylation is present at Asn-855. 2 consecutive transmembrane segments (helical) span residues 899-919 (AWLAGFGMGSAQCLTFLTWAL) and 933-953 (ISAGDVFKTFFVLVSTGKVIA). The ABC transporter 2 domain occupies 998–1236 (IELKNIDFSY…GGQFSRLAHA (239 aa)). Residue 1033–1040 (GTSGCGKS) participates in ATP binding. Asn-1187 carries N-linked (GlcNAc...) asparagine glycosylation.

The protein belongs to the ABC transporter superfamily. ABCB family. Multidrug resistance exporter (TC 3.A.1.201) subfamily.

It is found in the membrane. The sequence is that of Putative ABC transporter B family member 8 (ABCB8) from Arabidopsis thaliana (Mouse-ear cress).